The primary structure comprises 150 residues: Alkaline nuclease (150 aa).

This sequence belongs to the baculo-herpesviridae alkaline nuclease family.

The sequence is that of Alkaline nuclease (UL12) from Suid herpesvirus 1 (strain NIA-3) (SuHV-1).